Here is a 249-residue protein sequence, read N- to C-terminus: Proteasome activator complex subunit 1 (249 aa).

A disordered region spans residues 60 to 101; the sequence is PLDIPVPDPVKEKEKGERKKQQEKEDKDEKKKGEDEDKGPPC. Basic and acidic residues predominate over residues 68 to 98; it reads PVKEKEKGERKKQQEKEDKDEKKKGEDEDKG.

Belongs to the PA28 family. Heterodimer of PSME1 and PSME2, which forms a hexameric ring. PSME1 can form homoheptamers.

Functionally, implicated in immunoproteasome assembly and required for efficient antigen processing. The PA28 activator complex enhances the generation of class I binding peptides by altering the cleavage pattern of the proteasome. The chain is Proteasome activator complex subunit 1 (PSME1) from Macaca fascicularis (Crab-eating macaque).